The chain runs to 310 residues: Probable manganese-dependent inorganic pyrophosphatase (310 aa).

Mn(2+)-binding residues include His-9, Asp-13, Asp-15, Asp-75, His-97, and Asp-149.

The protein belongs to the PPase class C family. The cofactor is Mn(2+).

The protein localises to the cytoplasm. The catalysed reaction is diphosphate + H2O = 2 phosphate + H(+). In Brevibacillus brevis (strain 47 / JCM 6285 / NBRC 100599), this protein is Probable manganese-dependent inorganic pyrophosphatase.